Here is a 445-residue protein sequence, read N- to C-terminus: Cyclin-B1-2 (445 aa).

Belongs to the cyclin family. Cyclin AB subfamily. As to quaternary structure, interacts with FZR2/CCS52A1, FZR1/CCS52A2 and FZR3/CCS52B. Expressed in roots, stems and flowers.

Its function is as follows. May induce mitotic cell division. This chain is Cyclin-B1-2 (CYCB1-2), found in Arabidopsis thaliana (Mouse-ear cress).